The primary structure comprises 62 residues: Large ribosomal subunit protein uL29 (62 aa).

This sequence belongs to the universal ribosomal protein uL29 family.

This chain is Large ribosomal subunit protein uL29, found in Geobacter sp. (strain M21).